The sequence spans 130 residues: Albumin-1 D (130 aa).

The first 26 residues, 1–26 (MASVKLASLIVLFATLGMFLTKNVGA), serve as a signal peptide directing secretion. Cystine bridges form between cysteine 29–cysteine 46, cysteine 33–cysteine 48, and cysteine 41–cysteine 58. Propeptides lie at residues 64-69 (VFLKAN) and 123-130 (LLKSVSTA).

In terms of processing, the C-terminal glycine may be removed from PA1b. Major component of both the cotyledons and embryonic axes of mature seeds.

In terms of biological role, PA1b binds to basic 7S globulin (BG) and stimulates its phosphorylation activity. Involved in the signal transduction system to regulate the growth and differentiation as a hormone peptide. Toxic to various insects through binding to a high affinity binding site in the insect gut. In Pisum sativum (Garden pea), this protein is Albumin-1 D.